A 990-amino-acid chain; its full sequence is Chondroitin sulfate ABC exolyase (990 aa).

H453 serves as the catalytic Proton acceptor. The active-site Proton donor is the Y460.

This sequence belongs to the polysaccharide lyase 8 family.

The catalysed reaction is Exolytic removal of Delta(4)-unsaturated disaccharide residues from the non-reducing ends of both polymeric chondroitin/dermatan sulfates and their oligosaccharide fragments.. With respect to regulation, inhibited by Zn(2+), whereas Ni(2+), Fe(2+), and Cu(2+) have little or no effect on activity. Its function is as follows. Broad-specificity glycosaminoglycan lyase, which acts in an exolytic fashion, and preferentially degrades the tetra- and hexasaccharide derivatives of chondroitin sulfate and dermatan sulfate produced by the chondroitin sulfate ABC endolyase, to yield the respective disaccharides. To a lesser extent, is also able to split off disaccharide residues directly from polymeric chondroitin 4- and 6-sulfate, dermatan sulfate, chondroitin, and hyaluronan. Is not active against keratan sulfate, heparan sulfate, and heparin. This is Chondroitin sulfate ABC exolyase (ChABCII) from Proteus vulgaris.